Here is a 316-residue protein sequence, read N- to C-terminus: UDP-N-acetylenolpyruvoylglucosamine reductase (316 aa).

The FAD-binding PCMH-type domain occupies 27–225 (VGGKAERFYR…KTAINALLKK (199 aa)). Arg190 is a catalytic residue. The Proton donor role is filled by Ser239. Glu309 is a catalytic residue.

Belongs to the MurB family. FAD serves as cofactor.

The protein localises to the cytoplasm. The enzyme catalyses UDP-N-acetyl-alpha-D-muramate + NADP(+) = UDP-N-acetyl-3-O-(1-carboxyvinyl)-alpha-D-glucosamine + NADPH + H(+). It participates in cell wall biogenesis; peptidoglycan biosynthesis. Cell wall formation. This Coxiella burnetii (strain Dugway 5J108-111) protein is UDP-N-acetylenolpyruvoylglucosamine reductase.